A 192-amino-acid chain; its full sequence is Nucleotidase CA_C3379 (192 aa).

This sequence belongs to the 5'(3')-deoxyribonucleotidase family. Mg(2+) is required as a cofactor.

It carries out the reaction sugar phosphate + H2O = sugar + phosphate.. Functionally, catalyzes the dephosphorylation of nucleotide monophosphates and of different sugar phosphates in vitro. The polypeptide is Nucleotidase CA_C3379 (Clostridium acetobutylicum (strain ATCC 824 / DSM 792 / JCM 1419 / IAM 19013 / LMG 5710 / NBRC 13948 / NRRL B-527 / VKM B-1787 / 2291 / W)).